The sequence spans 627 residues: (+)-3-carene synthase 1, chloroplastic (627 aa).

Residues 1-36 (MSVISIVPLASKPCLYKSFISSTHEPKALRRPISTV) constitute a chloroplast transit peptide. Residues aspartate 378, aspartate 382, and aspartate 530 each coordinate Mg(2+). Positions 378-382 (DDMYD) match the DDXXD motif motif.

This sequence belongs to the terpene synthase family. Tpsd subfamily. Mg(2+) serves as cofactor. The cofactor is Mn(2+).

It localises to the plastid. It is found in the chloroplast. It catalyses the reaction (2E)-geranyl diphosphate = (+)-car-3-ene + diphosphate. It participates in terpene metabolism; oleoresin biosynthesis. Terpene synthase (TPS) involved in the biosynthesis of monoterpene natural products included in conifer oleoresin secretions and volatile emissions; these compounds contribute to biotic and abiotic stress defense against herbivores (e.g. insect attack by white pine weevil P.strobi) and pathogens. Catalyzes the conversion of (2E)-geranyl diphosphate (GPP) to (+)-car-3-ene. This is (+)-3-carene synthase 1, chloroplastic from Picea sitchensis (Sitka spruce).